Consider the following 150-residue polypeptide: Photosystem I reaction center subunit XI (150 aa).

Residues 1–72 are Stromal-facing; that stretch reads MSDFIQSYNN…DKLGPLRNTD (72 aa). A helical transmembrane segment spans residues 73–93; sequence VALLSGFLSAVGLIIILTVCL. The Lumenal portion of the chain corresponds to 94-118; it reads SMYGNVSFDKDDAKDLLQTTEGWGQ. A helical transmembrane segment spans residues 119-139; it reads FTAGFLVGAVGGSGFAYLLLA. Over 140 to 150 the chain is Stromal; that stretch reads NIPVLQNLGLS.

Belongs to the PsaL family.

It localises to the plastid. The protein localises to the chloroplast thylakoid membrane. This is Photosystem I reaction center subunit XI from Gracilaria tenuistipitata var. liui (Red alga).